Reading from the N-terminus, the 952-residue chain is Calsyntenin-1 (952 aa).

The signal sequence occupies residues 1–28; it reads MLRRPAPALARAVRLLLAGLLYGGGVWA. Residues 29–830 lie on the Extracellular side of the membrane; it reads ARVNKHKPWL…PHPFAVVPST (802 aa). Cadherin domains lie at 38–154 and 155–255; these read LEPT…APVF and KEKS…SPGW. A glycan (N-linked (GlcNAc...) asparagine) is linked at Asn356. The helical transmembrane segment at 831 to 851 threads the bilayer; it reads ATVVIVVCVSFLVFMIILGVF. Topologically, residues 852 to 952 are cytoplasmic; sequence RIRAAHQRTM…LEWDYSTLSY (101 aa). The tract at residues 886–952 is disordered; that stretch reads METYEDQHSS…LEWDYSTLSY (67 aa). Positions 896 to 930 are enriched in acidic residues; it reads EEEEEEEEEEESEDGEEEEDITSAESESSEEEEGG. Residues 934-952 are compositionally biased toward polar residues; sequence GQNTTRQQQLEWDYSTLSY.

It belongs to the calsyntenin family. Directly interacts with APBA2. Forms a tripartite complex with APBA2 and APP. Interacts with KLC1. In terms of assembly, interacts with APBB1; this interaction stabilizes AlcICD metabolism. As to quaternary structure, interacts with PSEN1. In terms of processing, proteolytically processed under normal cellular conditions. A primary zeta-cleavage generates a large extracellular (soluble) N-terminal domain (sAlc) and a short C-terminal transmembrane fragment (CTF1). A secondary cleavage catalyzed by presenilin gamma-secretase within the transmembrane domain releases the beta-Alc-alpha chain in the extracellular milieu and produces an intracellular fragment (AlcICD). This processing is strongly suppressed in the tripartite complex formed with APBA2 and APP, which seems to prevent the association with PSEN1. Preferentially expressed in the retina and brain.

Its subcellular location is the postsynaptic cell membrane. It localises to the endoplasmic reticulum membrane. The protein localises to the golgi apparatus membrane. It is found in the cell projection. The protein resides in the neuron projection. Its subcellular location is the nucleus. Its function is as follows. Postsynaptic adhesion molecule that binds to presynaptic neurexins to mediate both excitatory and inhibitory synapse formation. Promotes synapse development by acting as a cell adhesion molecule at the postsynaptic membrane, which associates with neurexin-alpha at the presynaptic membrane. Also functions as a cargo in axonal anterograde transport by acting as a molecular adapter that promotes KLC1 association with vesicles. Complex formation with APBA2 and APP, stabilizes APP metabolism and enhances APBA2-mediated suppression of beta-APP40 secretion, due to the retardation of intracellular APP maturation. Functionally, as intracellular fragment AlcICD, suppresses APBB1-dependent transactivation stimulated by APP C-terminal intracellular fragment (AICD), most probably by competing with AICD for APBB1-binding. In terms of biological role, in complex with APBA2 and C99, a C-terminal APP fragment, abolishes C99 interaction with PSEN1 and thus APP C99 cleavage by gamma-secretase, most probably through stabilization of the direct interaction between APBA2 and APP. The sequence is that of Calsyntenin-1 (Clstn1) from Rattus norvegicus (Rat).